A 427-amino-acid chain; its full sequence is C4-dicarboxylate transport protein (427 aa).

Transmembrane regions (helical) follow at residues Ile-5–His-25, Leu-44–Met-64, Ile-76–Val-96, Ile-142–Phe-162, Val-184–Phe-206, Leu-222–Ala-242, Ile-307–Phe-327, Ile-330–Gly-350, and Ile-352–Ile-372.

This sequence belongs to the dicarboxylate/amino acid:cation symporter (DAACS) (TC 2.A.23) family.

The protein localises to the cell inner membrane. Functionally, responsible for the transport of dicarboxylates such as succinate, fumarate, and malate from the periplasm across the membrane. This chain is C4-dicarboxylate transport protein, found in Aeromonas salmonicida (strain A449).